The chain runs to 83 residues: Small ribosomal subunit protein eS21 (83 aa).

Residue M1 is modified to N-acetylmethionine. The residue at position 81 (K81) is an N6-acetyllysine.

The protein belongs to the eukaryotic ribosomal protein eS21 family. Component of the 40S small ribosomal subunit.

The protein localises to the cytoplasm. It localises to the cytosol. The protein resides in the rough endoplasmic reticulum. Functionally, component of the small ribosomal subunit. The ribosome is a large ribonucleoprotein complex responsible for the synthesis of proteins in the cell. The sequence is that of Small ribosomal subunit protein eS21 (Rps21) from Mus musculus (Mouse).